The sequence spans 1270 residues: DNA-directed RNA polymerase subunit beta (1270 aa).

It belongs to the RNA polymerase beta chain family. In terms of assembly, the RNAP catalytic core consists of 2 alpha, 1 beta, 1 beta' and 1 omega subunit. When a sigma factor is associated with the core the holoenzyme is formed, which can initiate transcription.

The catalysed reaction is RNA(n) + a ribonucleoside 5'-triphosphate = RNA(n+1) + diphosphate. Its function is as follows. DNA-dependent RNA polymerase catalyzes the transcription of DNA into RNA using the four ribonucleoside triphosphates as substrates. This Bacteroides thetaiotaomicron (strain ATCC 29148 / DSM 2079 / JCM 5827 / CCUG 10774 / NCTC 10582 / VPI-5482 / E50) protein is DNA-directed RNA polymerase subunit beta.